A 362-amino-acid chain; its full sequence is Molybdenum import ATP-binding protein ModC (362 aa).

An ABC transporter domain is found at 2 to 236; sequence ASPIEVRLHM…LDLPLAMGGD (235 aa). 34-41 contacts ATP; the sequence is GPSGSGKT. Residues 297-362 form the Mop domain; sequence QSSILNRLPV…AQIKAVAVLA (66 aa).

This sequence belongs to the ABC transporter superfamily. Molybdate importer (TC 3.A.1.8) family. In terms of assembly, the complex is composed of two ATP-binding proteins (ModC), two transmembrane proteins (ModB) and a solute-binding protein (ModA).

The protein resides in the cell inner membrane. It carries out the reaction molybdate(out) + ATP + H2O = molybdate(in) + ADP + phosphate + H(+). Part of the ABC transporter complex ModABC involved in molybdenum import. Responsible for energy coupling to the transport system. The sequence is that of Molybdenum import ATP-binding protein ModC from Pseudomonas savastanoi pv. phaseolicola (strain 1448A / Race 6) (Pseudomonas syringae pv. phaseolicola (strain 1448A / Race 6)).